A 965-amino-acid chain; its full sequence is MARPSLSPSNPLGFTPWPVTVITAVVYLALVVPLLVVHHVVPSAPSSSPKGLNLTEAWADLQELTHGFHPYNSHRNDEVHEWLLKRILELIDSAPPASEYGSVGEEKPDIVVFDDTQSNLTFSGRGSGLGVYFESTNIMVYIRGWEEDRERWWEDPHGRPAGKGGVLVNAHYDSVSTGYGATDDGVGVVSCLQLIKYFTTPGHVPRRGLVLLFNNGEEDFLNGARVYSQHPISQLPHTFLNLEGAGAGGRATLFRSSDAEVTKPYMRAPHPFGSVLSANGFEAGLISSQTDYVVFEGDLGLRGLDVAFMEPRARYHTDEDDARHTSLASVWHMLSAAVATTEGLVSDASSRFEGLPREDGRIASGSGPKGVWFDLFGSAFVVFELHTLFALSVTLLVVAPLVLLVTSIALARADKMYLFRSSASPEDSDGSEVVPLHGVRGFFRFPFLLVIPTAVTVGLAYLVTKFNPYIIHSSEYAVWSMMISAWVFLAWFVSRVADFARPSAFHRVYTLTWLFLVEWVFLVISTVYENQYGLAGGYFVLFVFAGTFLATWISYLELFALPRKSDYATQLALPSRRTSSHGSRLGTASGEDVEDGEDEDDDGTTAEATETTSLLRGQRTTFANYVRVTGDYLRDDDEEPRQPNLYGHEQAWSIHLPKWVWVLQFLLTAPLVLIFVGPLALLLTSALRQTGQDGSPSLFIYIAVAALTTLLFIPLLPFIHRYTHHIPLFLLCVFAGTLIYNLVAFPFSPANRLKLFFIQEVDLDTGVNHASLSGAYPFVHDVARRLPSTAGQNITCDLAMLRPKCSWHGIPPQVVQPAAASKMEDWLSYNITKSDSEPKAQLSISGRNTRACKVVFDRPVLDFQVADSAYDPRFPHVSPDGTKEIRLWSREWGHTWTVDVEWAADAEETDEKGPGLSGRVVCLWSDGNSAGVIPALDEVRRYAPVWAGVSKLSDGLVEGSRRFEV.

Residues 1–16 are Cytoplasmic-facing; it reads MARPSLSPSNPLGFTP. Residues 17–37 form a helical membrane-spanning segment; that stretch reads WPVTVITAVVYLALVVPLLVV. At 38–387 the chain is on the vacuolar side; sequence HHVVPSAPSS…SAFVVFELHT (350 aa). 2 N-linked (GlcNAc...) asparagine glycosylation sites follow: Asn-53 and Asn-119. 2 residues coordinate Zn(2+): His-171 and Asp-183. Catalysis depends on Glu-217, which acts as the Proton acceptor. Glu-218, Glu-243, and His-316 together coordinate Zn(2+). The chain crosses the membrane as a helical span at residues 388 to 408; that stretch reads LFALSVTLLVVAPLVLLVTSI. Residues 409-441 are Cytoplasmic-facing; that stretch reads ALARADKMYLFRSSASPEDSDGSEVVPLHGVRG. Residues 442-462 traverse the membrane as a helical segment; sequence FFRFPFLLVIPTAVTVGLAYL. Topologically, residues 463–472 are vacuolar; the sequence is VTKFNPYIIH. Residues 473 to 493 traverse the membrane as a helical segment; that stretch reads SSEYAVWSMMISAWVFLAWFV. Topologically, residues 494-507 are cytoplasmic; it reads SRVADFARPSAFHR. Residues 508 to 528 form a helical membrane-spanning segment; the sequence is VYTLTWLFLVEWVFLVISTVY. Residues 529–532 are Vacuolar-facing; it reads ENQY. A helical membrane pass occupies residues 533–553; the sequence is GLAGGYFVLFVFAGTFLATWI. Residues 554 to 661 lie on the Cytoplasmic side of the membrane; it reads SYLELFALPR…WSIHLPKWVW (108 aa). The tract at residues 577–610 is disordered; the sequence is RTSSHGSRLGTASGEDVEDGEDEDDDGTTAEATE. Over residues 591 to 604 the composition is skewed to acidic residues; it reads EDVEDGEDEDDDGT. A helical transmembrane segment spans residues 662–682; it reads VLQFLLTAPLVLIFVGPLALL. The Vacuolar portion of the chain corresponds to 683 to 698; that stretch reads LTSALRQTGQDGSPSL. A helical membrane pass occupies residues 699-719; sequence FIYIAVAALTTLLFIPLLPFI. Residues 720–725 lie on the Cytoplasmic side of the membrane; the sequence is HRYTHH. A helical transmembrane segment spans residues 726–746; sequence IPLFLLCVFAGTLIYNLVAFP. Over 747–965 the chain is Vacuolar; the sequence is FSPANRLKLF…LVEGSRRFEV (219 aa). Residues Asn-793 and Asn-830 are each glycosylated (N-linked (GlcNAc...) asparagine).

It belongs to the peptidase M28 family. Zn(2+) serves as cofactor.

It is found in the vacuole membrane. In terms of biological role, may be involved in vacuolar sorting and osmoregulation. This chain is Vacuolar membrane protease, found in Aspergillus fumigatus (strain CBS 144.89 / FGSC A1163 / CEA10) (Neosartorya fumigata).